The following is a 445-amino-acid chain: Methylenetetrahydrofolate--tRNA-(uracil-5-)-methyltransferase TrmFO (445 aa).

G10–G15 lines the FAD pocket.

Belongs to the MnmG family. TrmFO subfamily. The cofactor is FAD.

Its subcellular location is the cytoplasm. It carries out the reaction uridine(54) in tRNA + (6R)-5,10-methylene-5,6,7,8-tetrahydrofolate + NADH + H(+) = 5-methyluridine(54) in tRNA + (6S)-5,6,7,8-tetrahydrofolate + NAD(+). The catalysed reaction is uridine(54) in tRNA + (6R)-5,10-methylene-5,6,7,8-tetrahydrofolate + NADPH + H(+) = 5-methyluridine(54) in tRNA + (6S)-5,6,7,8-tetrahydrofolate + NADP(+). Its function is as follows. Catalyzes the folate-dependent formation of 5-methyl-uridine at position 54 (M-5-U54) in all tRNAs. This Lawsonia intracellularis (strain PHE/MN1-00) protein is Methylenetetrahydrofolate--tRNA-(uracil-5-)-methyltransferase TrmFO.